The following is a 622-amino-acid chain: 1-deoxy-D-xylulose-5-phosphate synthase (622 aa).

Residues H80 and 121–123 (GHS) each bind thiamine diphosphate. D152 lines the Mg(2+) pocket. Thiamine diphosphate-binding positions include 153 to 154 (GA), N181, Y288, and E370. Residue N181 participates in Mg(2+) binding.

The protein belongs to the transketolase family. DXPS subfamily. As to quaternary structure, homodimer. The cofactor is Mg(2+). Requires thiamine diphosphate as cofactor.

The enzyme catalyses D-glyceraldehyde 3-phosphate + pyruvate + H(+) = 1-deoxy-D-xylulose 5-phosphate + CO2. It functions in the pathway metabolic intermediate biosynthesis; 1-deoxy-D-xylulose 5-phosphate biosynthesis; 1-deoxy-D-xylulose 5-phosphate from D-glyceraldehyde 3-phosphate and pyruvate: step 1/1. Its function is as follows. Catalyzes the acyloin condensation reaction between C atoms 2 and 3 of pyruvate and glyceraldehyde 3-phosphate to yield 1-deoxy-D-xylulose-5-phosphate (DXP). The polypeptide is 1-deoxy-D-xylulose-5-phosphate synthase (Hamiltonella defensa subsp. Acyrthosiphon pisum (strain 5AT)).